The sequence spans 322 residues: Beta-carotene 3-hydroxylase, chloroplastic (322 aa).

Residues 1 to 68 constitute a chloroplast transit peptide; the sequence is TFHKPVSGAS…AQRCSLVRLR (68 aa). Transmembrane regions (helical) follow at residues 118–138 and 149–169; these read QAAA…ATYL and AVPW…ALGM. In terms of domain architecture, Fatty acid hydroxylase spans 164–286; the sequence is GGALGMEMYA…AHQLHHSGKY (123 aa). Positions 177–182 match the Histidine box-1 motif; it reads HKAIWH. The short motif at 191-195 is the Histidine box-2 element; that stretch reads HKSHH. The next 2 helical transmembrane spans lie at 207 to 227 and 231 to 251; these read LFAI…FWLP and GAAC…YMFV. A Histidine box-3 motif is present at residues 252–257; sequence HDGLVH. The short motif at 278-282 is the Histidine box-4 element; that stretch reads HQLHH.

Belongs to the sterol desaturase family.

It is found in the plastid. The protein resides in the chloroplast membrane. The enzyme catalyses all-trans-beta-carotene + 4 reduced [2Fe-2S]-[ferredoxin] + 2 O2 + 4 H(+) = all-trans-zeaxanthin + 4 oxidized [2Fe-2S]-[ferredoxin] + 2 H2O. Its function is as follows. Nonheme diiron monooxygenase involved in the biosynthesis of astaxanthin. Hydroxylates beta-ring of beta-carotene and catalyzes the conversion of canthaxanthin to astaxanthin. Uses ferredoxin as an electron donor. The polypeptide is Beta-carotene 3-hydroxylase, chloroplastic (CRTZ) (Haematococcus lacustris (Green alga)).